The following is a 188-amino-acid chain: Mitochondrial import receptor subunit TOM20 homolog (188 aa).

Residues 1–12 (MSDTILGFNKSN) lie on the Mitochondrial intermembrane side of the membrane. A helical membrane pass occupies residues 13 to 31 (VVLAAGIAGAAFLGYCIYF). Topologically, residues 32 to 188 (DHKRINAPDY…ELIDDTDDLE (157 aa)) are cytoplasmic. Disordered stretches follow at residues 42–73 (KDKI…AAPD) and 156–188 (DEAE…DDLE). Residues 58-67 (MAPRRPAAAG) are compositionally biased toward low complexity.

It belongs to the Tom20 family. Forms part of the preprotein translocase complex of the outer mitochondrial membrane (TOM complex).

It is found in the mitochondrion outer membrane. Its function is as follows. Central component of the receptor complex responsible for the recognition and translocation of cytosolically synthesized mitochondrial preproteins. Together with tomm-22 functions as the transit peptide receptor at the surface of the mitochondrion outer membrane and facilitates the movement of preproteins into the translocation pore. This Caenorhabditis elegans protein is Mitochondrial import receptor subunit TOM20 homolog.